The primary structure comprises 367 residues: MTSRNYLLLTPGPLTTSRTVKEAMLFDSCTWDDDYNIGVVEQIRQQLTELATASEGYTSVLLQGSGSYAVEAVLGSALGPQDKVLIVSNGAYGARMVEMAGLMGIAHHAYDCGEVARPDVQAIDAILNADPTISHIAMVHSETTTGMLNPIDEVGTLAHRYGKTYIVDAMSSFGGIPMDIAALHIDYLISSANKCIQGVPGFAFVIAREQKLAACKGRSRSLSLDLYAQWRCMEDNHGKWRFTSPTHTVLAFAQALKELAKEGGVAARHQRYQQNQRSLVAGMRALGFNTLLDDELHSPIITAFYSPEDPQYRFSEFYRRLKEQGFVIYPGKVSQSDCFRIGNIGEVYAADITALLTAIRTAMYWTK.

The residue at position 194 (lysine 194) is an N6-(pyridoxal phosphate)lysine.

The protein belongs to the class-V pyridoxal-phosphate-dependent aminotransferase family. PhnW subfamily. Homodimer. Requires pyridoxal 5'-phosphate as cofactor.

The enzyme catalyses (2-aminoethyl)phosphonate + pyruvate = phosphonoacetaldehyde + L-alanine. Functionally, involved in phosphonate degradation. In Salmonella dublin (strain CT_02021853), this protein is 2-aminoethylphosphonate--pyruvate transaminase.